Consider the following 271-residue polypeptide: Gap junction beta-5 protein (271 aa).

Residues Met1–Phe20 lie on the Cytoplasmic side of the membrane. A helical membrane pass occupies residues Gly21 to Ala40. At Glu41–Arg75 the chain is on the extracellular side. Residues Leu76–Arg98 traverse the membrane as a helical segment. Residues Lys99–Gly124 are Cytoplasmic-facing. The chain crosses the membrane as a helical span at residues Leu125–Phe147. Residues His148–Asn182 lie on the Extracellular side of the membrane. Residues Ile183–Tyr205 form a helical membrane-spanning segment. Residues Leu206 to Leu271 lie on the Cytoplasmic side of the membrane. Residues Ala217 to Lys237 are disordered.

Belongs to the connexin family. Beta-type (group I) subfamily. A connexon is composed of a hexamer of connexins. Expressed in skin.

It localises to the cell membrane. The protein localises to the cell junction. It is found in the gap junction. One gap junction consists of a cluster of closely packed pairs of transmembrane channels, the connexons, through which materials of low MW diffuse from one cell to a neighboring cell. This chain is Gap junction beta-5 protein (Gjb5), found in Rattus norvegicus (Rat).